The sequence spans 225 residues: Helicostatins (225 aa).

An N-terminal signal peptide occupies residues 1-18; it reads MLYSSLPVCFLVLGAALC. Residues 19–48 constitute a propeptide that is removed on maturation; it reads APERMQNEAEPHDLQPHEAEPHSDHVAPLA. Leucine amide occurs at positions 58, 79, and 90. A propeptide spanning residues 94–127 is cleaved from the precursor; that stretch reads SVDEDQSNDEQQLTTSDLDQAALAELFDQYDDAE. At Leu137 the chain carries Leucine amide. The propeptide occupies 141–149; the sequence is FADDETSEE. A leucine amide mark is found at Leu159, Leu170, Leu181, Leu192, and Leu206. Residues 205 to 225 form a disordered region; that stretch reads GLGKRSGDDVSADDSDNYFDV. A propeptide spanning residues 210–225 is cleaved from the precursor; sequence SGDDVSADDSDNYFDV. The span at 214–225 shows a compositional bias: acidic residues; that stretch reads VSADDSDNYFDV.

The protein belongs to the allatostatin family. Highly expressed in the CNS and gut of larvae. Also expressed in the cells of the larval brain and ventral nerve cord and in endocrine cells of the midgut.

It localises to the secreted. In terms of biological role, may act as a neurotransmitter or neuromodulator. In Helicoverpa armigera (Cotton bollworm), this protein is Helicostatins.